Here is a 401-residue protein sequence, read N- to C-terminus: Succinyl-diaminopimelate desuccinylase (401 aa).

Histidine 82 is a binding site for Zn(2+). The active site involves aspartate 84. A Zn(2+)-binding site is contributed by aspartate 115. Glutamate 149 functions as the Proton acceptor in the catalytic mechanism. The Zn(2+) site is built by glutamate 150, glutamate 178, and histidine 364.

This sequence belongs to the peptidase M20A family. DapE subfamily. Homodimer. Zn(2+) serves as cofactor. The cofactor is Co(2+).

The catalysed reaction is N-succinyl-(2S,6S)-2,6-diaminopimelate + H2O = (2S,6S)-2,6-diaminopimelate + succinate. The protein operates within amino-acid biosynthesis; L-lysine biosynthesis via DAP pathway; LL-2,6-diaminopimelate from (S)-tetrahydrodipicolinate (succinylase route): step 3/3. Its function is as follows. Catalyzes the hydrolysis of N-succinyl-L,L-diaminopimelic acid (SDAP), forming succinate and LL-2,6-diaminopimelate (DAP), an intermediate involved in the bacterial biosynthesis of lysine and meso-diaminopimelic acid, an essential component of bacterial cell walls. The protein is Succinyl-diaminopimelate desuccinylase of Verminephrobacter eiseniae (strain EF01-2).